The sequence spans 446 residues: Zinc finger protein 19 (446 aa).

One can recognise a KRAB domain in the interval 2–73 (VTFEDVAVHF…EAQDDPPAET (72 aa)). C2H2-type zinc fingers lie at residues 149–171 (FICEECGKSFSYFSYYARHQRIH), 177–199 (FECSECGKAFNGNSSLIRHQRIH), 205–227 (YQCEECGRAFNDNANLIRHQRIH), 233–255 (YYCTECGNSFTSSSEFVIHQRIH), 261–283 (YECNECGKAFVGNSPLLRHQKIH), 289–311 (YECNECGKSFGRTSHLSQHQRIH), 317–339 (YSCKVCGQAFNFHTKLTRHQRIH), 345–367 (FDCVDCGKAFSAQEQLKRHLRIH), and 373–395 (YVCDECGKAFTSKRNLHQHQRIH). A C2H2-type 10; degenerate zinc finger spans residues 401–423 (YEYSKYEKAFGTSSQLGHLEHVH).

This sequence belongs to the krueppel C2H2-type zinc-finger protein family.

Its subcellular location is the nucleus. Functionally, may be involved in transcriptional regulation. The protein is Zinc finger protein 19 (ZNF19) of Pongo abelii (Sumatran orangutan).